The chain runs to 363 residues: uncharacterized protein (363 aa).

This is an uncharacterized protein from Methanocaldococcus jannaschii (strain ATCC 43067 / DSM 2661 / JAL-1 / JCM 10045 / NBRC 100440) (Methanococcus jannaschii).